Consider the following 774-residue polypeptide: 1,4-alpha-glucan branching enzyme GlgB (774 aa).

Aspartate 440 (nucleophile) is an active-site residue. The active-site Proton donor is the glutamate 493.

The protein belongs to the glycosyl hydrolase 13 family. GlgB subfamily. As to quaternary structure, monomer.

The catalysed reaction is Transfers a segment of a (1-&gt;4)-alpha-D-glucan chain to a primary hydroxy group in a similar glucan chain.. It functions in the pathway glycan biosynthesis; glycogen biosynthesis. Its function is as follows. Catalyzes the formation of the alpha-1,6-glucosidic linkages in glycogen by scission of a 1,4-alpha-linked oligosaccharide from growing alpha-1,4-glucan chains and the subsequent attachment of the oligosaccharide to the alpha-1,6 position. The protein is 1,4-alpha-glucan branching enzyme GlgB (glgB) of Synechococcus elongatus (strain ATCC 33912 / PCC 7942 / FACHB-805) (Anacystis nidulans R2).